We begin with the raw amino-acid sequence, 424 residues long: C4-dicarboxylate transport protein (424 aa).

The next 8 helical transmembrane spans lie at serine 4 to glycine 24, leucine 44 to methionine 64, valine 76 to valine 96, isoleucine 142 to phenylalanine 162, valine 184 to phenylalanine 206, leucine 222 to alanine 242, isoleucine 326 to valine 346, and isoleucine 352 to isoleucine 372.

The protein belongs to the dicarboxylate/amino acid:cation symporter (DAACS) (TC 2.A.23) family.

It is found in the cell inner membrane. Its function is as follows. Responsible for the transport of dicarboxylates such as succinate, fumarate, and malate from the periplasm across the membrane. The sequence is that of C4-dicarboxylate transport protein from Erwinia tasmaniensis (strain DSM 17950 / CFBP 7177 / CIP 109463 / NCPPB 4357 / Et1/99).